The sequence spans 241 residues: Triosephosphate isomerase (241 aa).

9–11 (NWK) contacts substrate. His-96 (electrophile) is an active-site residue. Glu-165 (proton acceptor) is an active-site residue. Residues Gly-171, Ser-204, and 225 to 226 (GG) contribute to the substrate site.

It belongs to the triosephosphate isomerase family. Homodimer.

It localises to the cytoplasm. It carries out the reaction D-glyceraldehyde 3-phosphate = dihydroxyacetone phosphate. Its pathway is carbohydrate biosynthesis; gluconeogenesis. It functions in the pathway carbohydrate degradation; glycolysis; D-glyceraldehyde 3-phosphate from glycerone phosphate: step 1/1. Functionally, involved in the gluconeogenesis. Catalyzes stereospecifically the conversion of dihydroxyacetone phosphate (DHAP) to D-glyceraldehyde-3-phosphate (G3P). This chain is Triosephosphate isomerase, found in Acaryochloris marina (strain MBIC 11017).